The chain runs to 595 residues: Elongation factor 4 (595 aa).

Residues lysine 2–alanine 183 enclose the tr-type G domain. Residues aspartate 14–threonine 19 and asparagine 130–aspartate 133 each bind GTP.

The protein belongs to the TRAFAC class translation factor GTPase superfamily. Classic translation factor GTPase family. LepA subfamily.

It is found in the cell inner membrane. The enzyme catalyses GTP + H2O = GDP + phosphate + H(+). In terms of biological role, required for accurate and efficient protein synthesis under certain stress conditions. May act as a fidelity factor of the translation reaction, by catalyzing a one-codon backward translocation of tRNAs on improperly translocated ribosomes. Back-translocation proceeds from a post-translocation (POST) complex to a pre-translocation (PRE) complex, thus giving elongation factor G a second chance to translocate the tRNAs correctly. Binds to ribosomes in a GTP-dependent manner. This chain is Elongation factor 4, found in Porphyromonas gingivalis (strain ATCC BAA-308 / W83).